A 237-amino-acid chain; its full sequence is Protein GrpE (237 aa).

Disordered stretches follow at residues 27-51 (EDRE…LSET) and 202-237 (AVSS…PQHS). 2 stretches are compositionally biased toward low complexity: residues 33–45 (ASTS…AEAS) and 204–213 (SSGSPTSEPS). Polar residues predominate over residues 227–237 (TPASPQNPQHS).

The protein belongs to the GrpE family. As to quaternary structure, homodimer.

The protein resides in the cytoplasm. Its function is as follows. Participates actively in the response to hyperosmotic and heat shock by preventing the aggregation of stress-denatured proteins, in association with DnaK and GrpE. It is the nucleotide exchange factor for DnaK and may function as a thermosensor. Unfolded proteins bind initially to DnaJ; upon interaction with the DnaJ-bound protein, DnaK hydrolyzes its bound ATP, resulting in the formation of a stable complex. GrpE releases ADP from DnaK; ATP binding to DnaK triggers the release of the substrate protein, thus completing the reaction cycle. Several rounds of ATP-dependent interactions between DnaJ, DnaK and GrpE are required for fully efficient folding. This is Protein GrpE from Synechococcus sp. (strain JA-3-3Ab) (Cyanobacteria bacterium Yellowstone A-Prime).